The chain runs to 1058 residues: Isoleucine--tRNA ligase (1058 aa).

The 'HIGH' region motif lies at proline 48–threonine 58. The short motif at lysine 596 to serine 600 is the 'KMSKS' region element. An ATP-binding site is contributed by lysine 599.

Belongs to the class-I aminoacyl-tRNA synthetase family. IleS type 2 subfamily. As to quaternary structure, monomer. It depends on Zn(2+) as a cofactor.

It localises to the cytoplasm. The enzyme catalyses tRNA(Ile) + L-isoleucine + ATP = L-isoleucyl-tRNA(Ile) + AMP + diphosphate. In terms of biological role, catalyzes the attachment of isoleucine to tRNA(Ile). As IleRS can inadvertently accommodate and process structurally similar amino acids such as valine, to avoid such errors it has two additional distinct tRNA(Ile)-dependent editing activities. One activity is designated as 'pretransfer' editing and involves the hydrolysis of activated Val-AMP. The other activity is designated 'posttransfer' editing and involves deacylation of mischarged Val-tRNA(Ile). The polypeptide is Isoleucine--tRNA ligase (Methanosarcina mazei (strain ATCC BAA-159 / DSM 3647 / Goe1 / Go1 / JCM 11833 / OCM 88) (Methanosarcina frisia)).